Reading from the N-terminus, the 58-residue chain is uncharacterized protein (58 aa).

It localises to the mitochondrion. This is an uncharacterized protein from Saccharomyces cerevisiae (strain ATCC 204508 / S288c) (Baker's yeast).